A 77-amino-acid chain; its full sequence is Acyl carrier protein (77 aa).

Residues 2 to 77 enclose the Carrier domain; that stretch reads ADTLSRITKI…DVVEYIEGRQ (76 aa). Serine 37 is subject to O-(pantetheine 4'-phosphoryl)serine.

Belongs to the acyl carrier protein (ACP) family. Post-translationally, 4'-phosphopantetheine is transferred from CoA to a specific serine of apo-ACP by AcpS. This modification is essential for activity because fatty acids are bound in thioester linkage to the sulfhydryl of the prosthetic group.

Its subcellular location is the cytoplasm. It functions in the pathway lipid metabolism; fatty acid biosynthesis. Carrier of the growing fatty acid chain in fatty acid biosynthesis. This Halalkalibacterium halodurans (strain ATCC BAA-125 / DSM 18197 / FERM 7344 / JCM 9153 / C-125) (Bacillus halodurans) protein is Acyl carrier protein.